Here is a 409-residue protein sequence, read N- to C-terminus: F-box protein At3g17320 (409 aa).

In terms of domain architecture, F-box spans 1-47; that stretch reads MTKISDLPRDLAEEVLSRVPVTYLRAIRFTCKKWNTLTKRRSFTKKL.

This Arabidopsis thaliana (Mouse-ear cress) protein is F-box protein At3g17320.